The chain runs to 233 residues: Small ribosomal subunit protein uS7m (233 aa).

The transit peptide at 1–28 directs the protein to the mitochondrion; the sequence is MAAPTGKLLVHRIRAGLTCLTQVRWSRY.

This sequence belongs to the universal ribosomal protein uS7 family. Component of the mitochondrial ribosome small subunit (28S) which comprises a 12S rRNA and about 30 distinct proteins.

It localises to the mitochondrion. The polypeptide is Small ribosomal subunit protein uS7m (mrps7) (Xenopus laevis (African clawed frog)).